A 467-amino-acid polypeptide reads, in one-letter code: Glutamate--tRNA ligase (467 aa).

The 'HIGH' region signature appears at 9–19 (PSPTGYLHIGG). Residues 237–241 (KLSKR) carry the 'KMSKS' region motif. Position 240 (Lys240) interacts with ATP.

This sequence belongs to the class-I aminoacyl-tRNA synthetase family. Glutamate--tRNA ligase type 1 subfamily. As to quaternary structure, monomer.

The protein resides in the cytoplasm. The enzyme catalyses tRNA(Glu) + L-glutamate + ATP = L-glutamyl-tRNA(Glu) + AMP + diphosphate. Functionally, catalyzes the attachment of glutamate to tRNA(Glu) in a two-step reaction: glutamate is first activated by ATP to form Glu-AMP and then transferred to the acceptor end of tRNA(Glu). In Xanthomonas campestris pv. campestris (strain B100), this protein is Glutamate--tRNA ligase.